Here is a 292-residue protein sequence, read N- to C-terminus: Keratin-associated protein 10-9 (292 aa).

25 repeat units span residues Cys26–Pro30, Cys31–Ser35, Cys36–Ala40, Cys57–Thr61, Cys79–Ser83, Cys99–Val103, Cys104–Val108, Cys109–Val113, Cys114–Ser118, Cys120–Ser124, Cys130–Ser134, Cys140–Val144, Cys145–Val149, Cys150–Thr154, Cys162–Ser166, Cys172–Ser176, Tyr182–Val186, Cys187–Val191, Cys192–Ile196, Cys197–Val201, Cys209–Ser213, Cys219–Ser223, Cys224–Ser228, Cys243–Val247, and Cys250–Thr254. Positions Cys26–Thr254 are 25 X 5 AA repeats of C-C-X(3).

The protein belongs to the KRTAP type 10 family. In terms of assembly, interacts with hair keratins. As to expression, restricted to a narrow region of the hair fiber cuticle, lying approximately 20 cell layers above the apex of the dermal papilla of the hair root; not detected in any other tissues.

Its function is as follows. In the hair cortex, hair keratin intermediate filaments are embedded in an interfilamentous matrix, consisting of hair keratin-associated proteins (KRTAP), which are essential for the formation of a rigid and resistant hair shaft through their extensive disulfide bond cross-linking with abundant cysteine residues of hair keratins. The matrix proteins include the high-sulfur and high-glycine-tyrosine keratins. This is Keratin-associated protein 10-9 (KRTAP10-9) from Homo sapiens (Human).